We begin with the raw amino-acid sequence, 192 residues long: Superoxide dismutase [Fe] (192 aa).

Residues His26, His73, Asp157, and His161 each contribute to the Fe cation site.

The protein belongs to the iron/manganese superoxide dismutase family. In terms of assembly, homodimer. The cofactor is Fe cation.

It catalyses the reaction 2 superoxide + 2 H(+) = H2O2 + O2. Functionally, destroys superoxide anion radicals which are normally produced within the cells and which are toxic to biological systems. The protein is Superoxide dismutase [Fe] of Pseudoalteromonas translucida (strain TAC 125).